Here is a 106-residue protein sequence, read N- to C-terminus: Large ribosomal subunit protein uL24 (106 aa).

It belongs to the universal ribosomal protein uL24 family. Part of the 50S ribosomal subunit.

Functionally, one of two assembly initiator proteins, it binds directly to the 5'-end of the 23S rRNA, where it nucleates assembly of the 50S subunit. In terms of biological role, one of the proteins that surrounds the polypeptide exit tunnel on the outside of the subunit. This Paramagnetospirillum magneticum (strain ATCC 700264 / AMB-1) (Magnetospirillum magneticum) protein is Large ribosomal subunit protein uL24.